Consider the following 104-residue polypeptide: Putative zinc finger protein ORF104b (104 aa).

A C2H2-type zinc finger spans residues 62–85; it reads YECKYCHTRYLSHTGIVYHLEREH.

This Acidianus sp. F28 (AFV-2) protein is Putative zinc finger protein ORF104b.